The sequence spans 252 residues: Large ribosomal subunit protein uL3 (252 aa).

N5-methylglutamine is present on Gln-169.

Belongs to the universal ribosomal protein uL3 family. In terms of assembly, part of the 50S ribosomal subunit. Forms a cluster with proteins L14 and L19. In terms of processing, methylated by PrmB.

In terms of biological role, one of the primary rRNA binding proteins, it binds directly near the 3'-end of the 23S rRNA, where it nucleates assembly of the 50S subunit. This Hyphomonas neptunium (strain ATCC 15444) protein is Large ribosomal subunit protein uL3.